The following is a 632-amino-acid chain: Threonine--tRNA ligase (632 aa).

In terms of domain architecture, TGS spans 1 to 59; sequence MIRITFLAKQKVEEYSSRVTGFDILQPDISKEAIALRVNGELYDLSREIESDTEIDVIQ. The tract at residues 240–532 is catalytic; sequence DHRRIAKDMD…LIEHYAGKFP (293 aa). 3 residues coordinate Zn(2+): C332, H383, and H509.

It belongs to the class-II aminoacyl-tRNA synthetase family. As to quaternary structure, homodimer. It depends on Zn(2+) as a cofactor.

It localises to the cytoplasm. It carries out the reaction tRNA(Thr) + L-threonine + ATP = L-threonyl-tRNA(Thr) + AMP + diphosphate + H(+). Functionally, catalyzes the attachment of threonine to tRNA(Thr) in a two-step reaction: L-threonine is first activated by ATP to form Thr-AMP and then transferred to the acceptor end of tRNA(Thr). Also edits incorrectly charged L-seryl-tRNA(Thr). This Wolbachia sp. subsp. Brugia malayi (strain TRS) protein is Threonine--tRNA ligase.